Consider the following 314-residue polypeptide: Mevalonate kinase (314 aa).

103-109 contacts ATP; that stretch reads GLGTSAA. The active-site Proton acceptor is the Asp150.

It belongs to the GHMP kinase family. Mevalonate kinase subfamily. Homodimer. Requires Mg(2+) as cofactor.

The protein localises to the cytoplasm. The catalysed reaction is (R)-mevalonate + ATP = (R)-5-phosphomevalonate + ADP + H(+). The protein operates within isoprenoid biosynthesis; isopentenyl diphosphate biosynthesis via mevalonate pathway; isopentenyl diphosphate from (R)-mevalonate: step 1/3. In terms of biological role, catalyzes the phosphorylation of (R)-mevalonate (MVA) to (R)-mevalonate 5-phosphate (MVAP). Functions in the mevalonate (MVA) pathway leading to isopentenyl diphosphate (IPP), a key precursor for the biosynthesis of isoprenoid compounds such as archaeal membrane lipids. The chain is Mevalonate kinase from Saccharolobus solfataricus (strain ATCC 35092 / DSM 1617 / JCM 11322 / P2) (Sulfolobus solfataricus).